Consider the following 173-residue polypeptide: Shikimate kinase 1 (173 aa).

14-19 (GAGKST) provides a ligand contact to ATP. Serine 18 serves as a coordination point for Mg(2+). Residues aspartate 36, arginine 60, and glycine 82 each coordinate substrate. An ATP-binding site is contributed by arginine 120. A substrate-binding site is contributed by arginine 140. ATP is bound at residue glutamine 157.

This sequence belongs to the shikimate kinase family. As to quaternary structure, monomer. The cofactor is Mg(2+).

It is found in the cytoplasm. The enzyme catalyses shikimate + ATP = 3-phosphoshikimate + ADP + H(+). It functions in the pathway metabolic intermediate biosynthesis; chorismate biosynthesis; chorismate from D-erythrose 4-phosphate and phosphoenolpyruvate: step 5/7. Catalyzes the specific phosphorylation of the 3-hydroxyl group of shikimic acid using ATP as a cosubstrate. The sequence is that of Shikimate kinase 1 from Serratia proteamaculans (strain 568).